Consider the following 664-residue polypeptide: Macrolide export ATP-binding/permease protein MacB (664 aa).

An ABC transporter domain is found at 8-246 (LEVHNLVREF…ELNKDPDAAP (239 aa)). Residue 44–51 (GQSGSGKS) coordinates ATP. A run of 4 helical transmembrane segments spans residues 287–307 (FLTM…VALG), 543–563 (IAVI…LVSV), 587–607 (FLIE…LLSL), and 629–649 (SIVA…FLPA).

Belongs to the ABC transporter superfamily. Macrolide exporter (TC 3.A.1.122) family. As to quaternary structure, homodimer. Part of the tripartite efflux system MacAB-TolC, which is composed of an inner membrane transporter, MacB, a periplasmic membrane fusion protein, MacA, and an outer membrane component, TolC. The complex forms a large protein conduit and can translocate molecules across both the inner and outer membranes. Interacts with MacA.

The protein resides in the cell inner membrane. Part of the tripartite efflux system MacAB-TolC. MacB is a non-canonical ABC transporter that contains transmembrane domains (TMD), which form a pore in the inner membrane, and an ATP-binding domain (NBD), which is responsible for energy generation. Confers resistance against macrolides. In Acinetobacter baylyi (strain ATCC 33305 / BD413 / ADP1), this protein is Macrolide export ATP-binding/permease protein MacB.